Reading from the N-terminus, the 446-residue chain is MADYLSVTQLTKYLKLKFDRDPYLERVYLTGQVSNFRKRPNHQYFSLKDEGAVIQATMWAGAYKKLGFDLEEGMKLNVVGRIQLYEPNGSYSIIIEKAEPDGIGALALQFEQLRQKLAGEGFFDERHKQALPQFVTKVGVVTSPSGAVIRDIITTISRRFPGVSILLFPTKVQGEGAAQEVAANIARANQREDLDLLIVGRGGGSIEDLWAFNEEIVVQAIFESRLPVISSVGHETDTTLADFVADRRAATPTAAAELATPITKTDIVSWIAEQQNRSYQACLRYIRQGQERVDKLSYSVMFRQPERLYDAYSQRLDRLTTSLMTTFKETLSEAKQEHLILEHRLASVNVQARLERYQDRLATAHRLLIANMTNQYDSKLAGFERAQAALLSLDTSRIIARGYALLKKDGAVAACVKDIKKGDHLSIVMRDGQLEVEVEDVNEKNI.

This sequence belongs to the XseA family. Heterooligomer composed of large and small subunits.

It localises to the cytoplasm. It catalyses the reaction Exonucleolytic cleavage in either 5'- to 3'- or 3'- to 5'-direction to yield nucleoside 5'-phosphates.. In terms of biological role, bidirectionally degrades single-stranded DNA into large acid-insoluble oligonucleotides, which are then degraded further into small acid-soluble oligonucleotides. The chain is Exodeoxyribonuclease 7 large subunit from Streptococcus equi subsp. zooepidemicus (strain MGCS10565).